Reading from the N-terminus, the 467-residue chain is 5-phosphohydroxy-L-lysine phospho-lyase (467 aa).

Lys-278 carries the N6-(pyridoxal phosphate)lysine modification.

This sequence belongs to the class-III pyridoxal-phosphate-dependent aminotransferase family. As to quaternary structure, homotetramer. The cofactor is pyridoxal 5'-phosphate.

It localises to the mitochondrion. The enzyme catalyses (5R)-5-phosphooxy-L-lysine + H2O = (S)-2-amino-6-oxohexanoate + NH4(+) + phosphate. Its function is as follows. Catalyzes the pyridoxal-phosphate-dependent breakdown of 5-phosphohydroxy-L-lysine, converting it to ammonia, inorganic phosphate and 2-aminoadipate semialdehyde. The protein is 5-phosphohydroxy-L-lysine phospho-lyase (Phykpl) of Mus musculus (Mouse).